Consider the following 861-residue polypeptide: Importin subunit beta-1 (861 aa).

Residue Ser-2 is modified to N-acetylserine. HEAT repeat units follow at residues 3-35, 37-66, 90-129, 134-164, 177-208, 219-255, 260-306, 317-362, 367-395, 402-442, 452-484, 496-530, 536-586, 592-629, 634-669, 675-713, 718-764, 773-812, and 819-859; these read TAEF…LSND, FLQF…LTLK, PEAK…ELPH, ELMK…YMCE, SNNI…LADS, EGER…MSLY, KPYM…ELAQ, FALS…AQNC, LEPV…AFGS, KVQR…ADSV, LPGV…VEQL, YPAL…MVEY, AETS…VIRK, EPVA…AASL, EKYL…ISNS, RRYS…ASNI, IPYL…IVAG, FPYV…IAAM, and KQFY…KRQL. The 82-residue stretch at 25 to 106 folds into the Importin N-terminal domain; sequence SETQLKKLSN…KTNALTALVS (82 aa). A Phosphoserine modification is found at Ser-836.

This sequence belongs to the importin beta family. Importin beta-1 subfamily. Forms a complex with the importin alpha subunit (SRP1/KAP60). Interacts with Ran (GSP1); interacts specifically with the GTP-bound form of Ran (GTP-Ran), protecting it from GTP hydrolysis and nucleotide exchange. Interacts with nucleoporin NUP1.

It is found in the cytoplasm. It localises to the nucleus. The protein resides in the nuclear pore complex. Functionally, importin beta subunit that functions in nuclear protein import through association with the importin alpha subunit, which binds to the classical nuclear localization signal (cNLS) in cargo substrates. Docking of the importin/substrate complex to the nuclear pore complex (NPC) is mediated by importin beta through binding to nucleoporin FxFG repeats and the complex is subsequently translocated through the pore by an energy requiring, Ran-dependent mechanism. At the nucleoplasmic side of the NPC, GTP-Ran binds to importin beta and the three components separate, leading to release of the cargo. Importin alpha and beta are re-exported from the nucleus to the cytoplasm where GTP hydrolysis releases Ran from importin beta. The directionality of nuclear import is thought to be conferred by an asymmetric distribution of the GTP- and GDP-bound forms of Ran between the cytoplasm and nucleus. Mediates the nuclear import of histones H2A and H2B. Mediates the nuclear import of transcription factor GCN4. The polypeptide is Importin subunit beta-1 (Saccharomyces cerevisiae (strain ATCC 204508 / S288c) (Baker's yeast)).